A 374-amino-acid chain; its full sequence is Serpin B8 (374 aa).

The protein belongs to the serpin family. Ov-serpin subfamily.

The protein localises to the cytoplasm. Has an important role in epithelial desmosome-mediated cell-cell adhesion. This is Serpin B8 (SERPINB8) from Bos taurus (Bovine).